A 43-amino-acid chain; its full sequence is Protein PsbN (43 aa).

Residues 5–27 (NLVAIFVSCLLVSLTGYALYTSF) traverse the membrane as a helical segment.

This sequence belongs to the PsbN family.

The protein localises to the plastid. It localises to the chloroplast thylakoid membrane. Its function is as follows. May play a role in photosystem I and II biogenesis. The protein is Protein PsbN of Ephedra sinica (Chinese ephedra).